A 1246-amino-acid polypeptide reads, in one-letter code: Stromal processing peptidase, chloroplastic (1246 aa).

The N-terminal 136 residues, 1-136 (MASFPSPPLA…AKIRRRHVLH (136 aa)), are a transit peptide targeting the chloroplast. Histidine 228 lines the Zn(2+) pocket. The Proton acceptor role is filled by glutamate 231. Histidine 232 is a Zn(2+) binding site. The active site involves glutamate 302. Glutamate 309 contacts Zn(2+).

Belongs to the peptidase M16 family. The cofactor is Zn(2+).

It localises to the plastid. The protein resides in the chloroplast stroma. Its function is as follows. Cleaves presequences (transit peptides) from chloroplastic protein precursors. Initially recognizes a precursor by binding to the C-terminus of its transit peptide and then removes the transit peptide in a single endoproteolytic step. In a next step, pursues the cleavage of transit peptide to a subfragment form. This chain is Stromal processing peptidase, chloroplastic, found in Oryza sativa subsp. japonica (Rice).